The sequence spans 310 residues: Light-independent protochlorophyllide reductase iron-sulfur ATP-binding protein (310 aa).

Residues 53–58 (GIGKST) and Lys-82 contribute to the ATP site. Ser-57 is a Mg(2+) binding site. The [4Fe-4S] cluster site is built by Cys-138 and Cys-172. ATP is bound by residues 223–224 (NR) and 247–249 (PAL).

Belongs to the NifH/BchL/ChlL family. As to quaternary structure, homodimer. Protochlorophyllide reductase is composed of three subunits; BchL, BchN and BchB. [4Fe-4S] cluster serves as cofactor.

The catalysed reaction is chlorophyllide a + oxidized 2[4Fe-4S]-[ferredoxin] + 2 ADP + 2 phosphate = protochlorophyllide a + reduced 2[4Fe-4S]-[ferredoxin] + 2 ATP + 2 H2O. It functions in the pathway porphyrin-containing compound metabolism; bacteriochlorophyll biosynthesis (light-independent). In terms of biological role, component of the dark-operative protochlorophyllide reductase (DPOR) that uses Mg-ATP and reduced ferredoxin to reduce ring D of protochlorophyllide (Pchlide) to form chlorophyllide a (Chlide). This reaction is light-independent. The L component serves as a unique electron donor to the NB-component of the complex, and binds Mg-ATP. The protein is Light-independent protochlorophyllide reductase iron-sulfur ATP-binding protein of Rhodopseudomonas palustris (strain BisA53).